The primary structure comprises 172 residues: Adenine phosphoribosyltransferase (172 aa).

It belongs to the purine/pyrimidine phosphoribosyltransferase family. Homodimer.

It localises to the cytoplasm. It carries out the reaction AMP + diphosphate = 5-phospho-alpha-D-ribose 1-diphosphate + adenine. Its pathway is purine metabolism; AMP biosynthesis via salvage pathway; AMP from adenine: step 1/1. Catalyzes a salvage reaction resulting in the formation of AMP, that is energically less costly than de novo synthesis. This chain is Adenine phosphoribosyltransferase, found in Clostridium kluyveri (strain NBRC 12016).